A 179-amino-acid chain; its full sequence is Guanosine-3',5'-bis(diphosphate) 3'-pyrophosphohydrolase MESH1 (179 aa).

At glycine 2 the chain carries N-acetylglycine. Residue lysine 25 is modified to N6-acetyllysine. In terms of domain architecture, HD spans 32–127 (YINHPIGVAR…VKLADKLYNL (96 aa)). Mn(2+) contacts are provided by histidine 35, histidine 61, and aspartate 62. Catalysis depends on nucleophile residues glutamate 65 and aspartate 66. Residue lysine 97 is modified to N6-acetyllysine. Aspartate 122 lines the Mn(2+) pocket. An N6-acetyllysine modification is found at lysine 123.

This sequence belongs to the MESH1 family. Mn(2+) is required as a cofactor.

It catalyses the reaction guanosine 3',5'-bis(diphosphate) + H2O = GDP + diphosphate + H(+). Its function is as follows. ppGpp hydrolyzing enzyme involved in starvation response. This is Guanosine-3',5'-bis(diphosphate) 3'-pyrophosphohydrolase MESH1 (Hddc3) from Mus musculus (Mouse).